A 249-amino-acid polypeptide reads, in one-letter code: Eukaryotic translation initiation factor 3 subunit K (249 aa).

Residues 46 to 222 (FDCYANLALL…VKVPTNKENE (177 aa)) enclose the PCI domain.

It belongs to the eIF-3 subunit K family. Component of the eukaryotic translation initiation factor 3 (eIF-3) complex.

The protein resides in the cytoplasm. In terms of biological role, component of the eukaryotic translation initiation factor 3 (eIF-3) complex, which is involved in protein synthesis of a specialized repertoire of mRNAs and, together with other initiation factors, stimulates binding of mRNA and methionyl-tRNAi to the 40S ribosome. The eIF-3 complex specifically targets and initiates translation of a subset of mRNAs involved in cell proliferation. The sequence is that of Eukaryotic translation initiation factor 3 subunit K from Aspergillus fumigatus (strain CBS 144.89 / FGSC A1163 / CEA10) (Neosartorya fumigata).